Consider the following 489-residue polypeptide: MDFAVSNRPLEKSKADALVVLLGKKNDLPQALPSATREQISQFTKAGDFNASKGQLVWLHAPQDLNADRLLLVGTGDSPLSDQGWLSLVHKATKTLASSPVKQAMWLLDDTHTQTLEWQVREGSRVVEESTYRFDNYRSKPAPASNLAKLTFWHAEKDTTLTKAHKTGKAVGLGVNVARDLGNLPPNDCYPEYLSGVARDLGKEYEKLTVKVLSQAQAEKMGMGAFHAVAKGSERQGQIIVMEYKGAKPTKQGPVALVGKGITFDTGGISLKPGATMDEMKYDMGGAASVFGSVKTVCELDLPIHLVAVVAAAENMPDGRAARPGDIVKTLSGQTVEILNTDAEGRLVLCDALTYVQQKHKPHTVIDIATLTGACVVALGAHAQAVYSNDDDLSEALLAAGKETGDRGWPMPLWDEYQGQLDSPFADMQNIGGPKAGSITAACFLSRFTKEVKWAHLDIAGTAWISGGMSKGATGRPVPMLTRYLMDNA.

The Mn(2+) site is built by Lys-260 and Asp-265. Residue Lys-272 is part of the active site. Asp-283, Asp-342, and Glu-344 together coordinate Mn(2+). Arg-346 is a catalytic residue.

This sequence belongs to the peptidase M17 family. Requires Mn(2+) as cofactor.

It is found in the cytoplasm. The enzyme catalyses Release of an N-terminal amino acid, Xaa-|-Yaa-, in which Xaa is preferably Leu, but may be other amino acids including Pro although not Arg or Lys, and Yaa may be Pro. Amino acid amides and methyl esters are also readily hydrolyzed, but rates on arylamides are exceedingly low.. It catalyses the reaction Release of an N-terminal amino acid, preferentially leucine, but not glutamic or aspartic acids.. Presumably involved in the processing and regular turnover of intracellular proteins. Catalyzes the removal of unsubstituted N-terminal amino acids from various peptides. In Alcanivorax borkumensis (strain ATCC 700651 / DSM 11573 / NCIMB 13689 / SK2), this protein is Probable cytosol aminopeptidase.